The primary structure comprises 233 residues: 2-C-methyl-D-erythritol 4-phosphate cytidylyltransferase (233 aa).

Belongs to the IspD/TarI cytidylyltransferase family. IspD subfamily.

It catalyses the reaction 2-C-methyl-D-erythritol 4-phosphate + CTP + H(+) = 4-CDP-2-C-methyl-D-erythritol + diphosphate. It functions in the pathway isoprenoid biosynthesis; isopentenyl diphosphate biosynthesis via DXP pathway; isopentenyl diphosphate from 1-deoxy-D-xylulose 5-phosphate: step 2/6. Its function is as follows. Catalyzes the formation of 4-diphosphocytidyl-2-C-methyl-D-erythritol from CTP and 2-C-methyl-D-erythritol 4-phosphate (MEP). The protein is 2-C-methyl-D-erythritol 4-phosphate cytidylyltransferase of Lachnoclostridium phytofermentans (strain ATCC 700394 / DSM 18823 / ISDg) (Clostridium phytofermentans).